Consider the following 565-residue polypeptide: CTP synthase (565 aa).

Residues 1 to 272 (MARPKNVKHI…DLRVMKKLGL (272 aa)) form an amidoligase domain region. S18 lines the CTP pocket. S18 lines the UTP pocket. An ATP-binding site is contributed by 19-24 (SLGKGI). Y59 serves as a coordination point for L-glutamine. D76 contacts ATP. Residues D76 and E146 each coordinate Mg(2+). CTP-binding positions include 153–155 (DIE), 193–198 (KTKPTQ), and K229. UTP contacts are provided by residues 193-198 (KTKPTQ) and K229. Positions 299-543 (TIGVCGKYTE…VAAAKEYEKG (245 aa)) constitute a Glutamine amidotransferase type-1 domain. An L-glutamine-binding site is contributed by G363. C390 acts as the Nucleophile; for glutamine hydrolysis in catalysis. Residues 391–394 (LGMQ), E414, and R471 each bind L-glutamine. Catalysis depends on residues H516 and E518.

This sequence belongs to the CTP synthase family. As to quaternary structure, homotetramer.

The enzyme catalyses UTP + L-glutamine + ATP + H2O = CTP + L-glutamate + ADP + phosphate + 2 H(+). The catalysed reaction is L-glutamine + H2O = L-glutamate + NH4(+). It carries out the reaction UTP + NH4(+) + ATP = CTP + ADP + phosphate + 2 H(+). The protein operates within pyrimidine metabolism; CTP biosynthesis via de novo pathway; CTP from UDP: step 2/2. Allosterically activated by GTP, when glutamine is the substrate; GTP has no effect on the reaction when ammonia is the substrate. The allosteric effector GTP functions by stabilizing the protein conformation that binds the tetrahedral intermediate(s) formed during glutamine hydrolysis. Inhibited by the product CTP, via allosteric rather than competitive inhibition. In terms of biological role, catalyzes the ATP-dependent amination of UTP to CTP with either L-glutamine or ammonia as the source of nitrogen. Regulates intracellular CTP levels through interactions with the four ribonucleotide triphosphates. This chain is CTP synthase, found in Chlorobium phaeobacteroides (strain DSM 266 / SMG 266 / 2430).